A 340-amino-acid chain; its full sequence is tRNA N6-adenosine threonylcarbamoyltransferase (340 aa).

Fe cation contacts are provided by H111 and H115. Substrate contacts are provided by residues 134-138 (LVSGG), D167, G180, and N276. D304 provides a ligand contact to Fe cation.

Belongs to the KAE1 / TsaD family. Fe(2+) is required as a cofactor.

Its subcellular location is the cytoplasm. The catalysed reaction is L-threonylcarbamoyladenylate + adenosine(37) in tRNA = N(6)-L-threonylcarbamoyladenosine(37) in tRNA + AMP + H(+). In terms of biological role, required for the formation of a threonylcarbamoyl group on adenosine at position 37 (t(6)A37) in tRNAs that read codons beginning with adenine. Is involved in the transfer of the threonylcarbamoyl moiety of threonylcarbamoyl-AMP (TC-AMP) to the N6 group of A37, together with TsaE and TsaB. TsaD likely plays a direct catalytic role in this reaction. This Helicobacter pylori (strain Shi470) protein is tRNA N6-adenosine threonylcarbamoyltransferase.